The chain runs to 328 residues: Lipoyl synthase (328 aa).

[4Fe-4S] cluster is bound by residues Cys75, Cys80, Cys86, Cys101, Cys105, Cys108, and Ser315. Residues 87–304 form the Radical SAM core domain; it reads FNHGTATFMI…EREAKKMGYE (218 aa).

Belongs to the radical SAM superfamily. Lipoyl synthase family. [4Fe-4S] cluster serves as cofactor.

The protein resides in the cytoplasm. The enzyme catalyses [[Fe-S] cluster scaffold protein carrying a second [4Fe-4S](2+) cluster] + N(6)-octanoyl-L-lysyl-[protein] + 2 oxidized [2Fe-2S]-[ferredoxin] + 2 S-adenosyl-L-methionine + 4 H(+) = [[Fe-S] cluster scaffold protein] + N(6)-[(R)-dihydrolipoyl]-L-lysyl-[protein] + 4 Fe(3+) + 2 hydrogen sulfide + 2 5'-deoxyadenosine + 2 L-methionine + 2 reduced [2Fe-2S]-[ferredoxin]. The protein operates within protein modification; protein lipoylation via endogenous pathway; protein N(6)-(lipoyl)lysine from octanoyl-[acyl-carrier-protein]: step 2/2. Its function is as follows. Catalyzes the radical-mediated insertion of two sulfur atoms into the C-6 and C-8 positions of the octanoyl moiety bound to the lipoyl domains of lipoate-dependent enzymes, thereby converting the octanoylated domains into lipoylated derivatives. The protein is Lipoyl synthase of Colwellia psychrerythraea (strain 34H / ATCC BAA-681) (Vibrio psychroerythus).